Consider the following 128-residue polypeptide: Aspartate 1-decarboxylase (128 aa).

Ser-25 (schiff-base intermediate with substrate; via pyruvic acid) is an active-site residue. Ser-25 bears the Pyruvic acid (Ser) mark. Thr-57 contributes to the substrate binding site. Catalysis depends on Tyr-58, which acts as the Proton donor. Substrate is bound at residue 73 to 75; the sequence is GSA.

It belongs to the PanD family. In terms of assembly, heterooctamer of four alpha and four beta subunits. Pyruvate is required as a cofactor. Post-translationally, is synthesized initially as an inactive proenzyme, which is activated by self-cleavage at a specific serine bond to produce a beta-subunit with a hydroxyl group at its C-terminus and an alpha-subunit with a pyruvoyl group at its N-terminus.

It localises to the cytoplasm. The catalysed reaction is L-aspartate + H(+) = beta-alanine + CO2. It participates in cofactor biosynthesis; (R)-pantothenate biosynthesis; beta-alanine from L-aspartate: step 1/1. Functionally, catalyzes the pyruvoyl-dependent decarboxylation of aspartate to produce beta-alanine. The polypeptide is Aspartate 1-decarboxylase (Burkholderia ambifaria (strain ATCC BAA-244 / DSM 16087 / CCUG 44356 / LMG 19182 / AMMD) (Burkholderia cepacia (strain AMMD))).